Here is a 665-residue protein sequence, read N- to C-terminus: Probable arginine--tRNA ligase, cytoplasmic (665 aa).

L-arginine contacts are provided by residues 204–206, H215, Y390, D394, and Q418; that span reads SPN. The short motif at 205-216 is the 'HIGH' region element; it reads PNIAKQMHVGHL. The interaction with tRNA stretch occupies residues 535-549; sequence NTAVYLLYTYTRICS.

The protein belongs to the class-I aminoacyl-tRNA synthetase family.

The protein resides in the cytoplasm. It is found in the cytosol. It catalyses the reaction tRNA(Arg) + L-arginine + ATP = L-arginyl-tRNA(Arg) + AMP + diphosphate. Its function is as follows. Forms part of a macromolecular complex that catalyzes the attachment of specific amino acids to cognate tRNAs during protein synthesis. The protein is Probable arginine--tRNA ligase, cytoplasmic of Drosophila melanogaster (Fruit fly).